The sequence spans 398 residues: NADH dehydrogenase [ubiquinone] iron-sulfur protein 2 (398 aa).

The [4Fe-4S] cluster site is built by cysteine 261, cysteine 267, and cysteine 282.

The protein belongs to the complex I 49 kDa subunit family. As to quaternary structure, complex I is composed of about 45 different subunits. This is a component of the iron-sulfur (IP) fragment of the enzyme. [4Fe-4S] cluster serves as cofactor.

It is found in the mitochondrion. The catalysed reaction is a ubiquinone + NADH + 5 H(+)(in) = a ubiquinol + NAD(+) + 4 H(+)(out). Functionally, core subunit of the mitochondrial membrane respiratory chain NADH dehydrogenase (Complex I) that is believed to belong to the minimal assembly required for catalysis. Complex I functions in the transfer of electrons from NADH to the respiratory chain. The immediate electron acceptor for the enzyme is believed to be ubiquinone. Component of the iron-sulfur (IP) fragment of the enzyme. In Nephroselmis olivacea (Green alga), this protein is NADH dehydrogenase [ubiquinone] iron-sulfur protein 2 (NAD7).